The following is a 151-amino-acid chain: uncharacterized protein (151 aa).

The disordered stretch occupies residues Met1–Gln24.

This is an uncharacterized protein from Acanthamoeba polyphaga mimivirus (APMV).